A 154-amino-acid chain; its full sequence is Methylglyoxal synthase (154 aa).

The MGS-like domain maps to 6–154 (GALPSRKQIA…AYIAERTKKL (149 aa)). Residues His19, Lys23, 45-48 (TGTT), and 65-66 (SG) contribute to the substrate site. The Proton donor/acceptor role is filled by Asp71. His98 contacts substrate.

This sequence belongs to the methylglyoxal synthase family.

It carries out the reaction dihydroxyacetone phosphate = methylglyoxal + phosphate. Functionally, catalyzes the formation of methylglyoxal from dihydroxyacetone phosphate. The polypeptide is Methylglyoxal synthase (Saccharophagus degradans (strain 2-40 / ATCC 43961 / DSM 17024)).